A 258-amino-acid polypeptide reads, in one-letter code: Acyl-[acyl-carrier-protein]--UDP-N-acetylglucosamine O-acyltransferase (258 aa).

The protein belongs to the transferase hexapeptide repeat family. LpxA subfamily. In terms of assembly, homotrimer.

It localises to the cytoplasm. The catalysed reaction is a (3R)-hydroxyacyl-[ACP] + UDP-N-acetyl-alpha-D-glucosamine = a UDP-3-O-[(3R)-3-hydroxyacyl]-N-acetyl-alpha-D-glucosamine + holo-[ACP]. It functions in the pathway glycolipid biosynthesis; lipid IV(A) biosynthesis; lipid IV(A) from (3R)-3-hydroxytetradecanoyl-[acyl-carrier-protein] and UDP-N-acetyl-alpha-D-glucosamine: step 1/6. Its function is as follows. Involved in the biosynthesis of lipid A, a phosphorylated glycolipid that anchors the lipopolysaccharide to the outer membrane of the cell. This is Acyl-[acyl-carrier-protein]--UDP-N-acetylglucosamine O-acyltransferase from Pseudomonas syringae pv. syringae (strain B728a).